The primary structure comprises 78 residues: Large ribosomal subunit protein bL28 (78 aa).

It belongs to the bacterial ribosomal protein bL28 family.

This Histophilus somni (strain 129Pt) (Haemophilus somnus) protein is Large ribosomal subunit protein bL28.